The following is a 264-amino-acid chain: Undecaprenyl-diphosphatase (264 aa).

8 helical membrane passes run 1-21 (MEIS…FLPI), 39-59 (QGLA…LFYF), 83-103 (SLLV…GLLF), 113-133 (SGVV…FADL), 143-163 (MTIK…IPGV), 184-204 (ANFS…LESI), 220-240 (LGVI…MGII), and 243-263 (IRML…LYLF).

The protein belongs to the UppP family.

Its subcellular location is the cell inner membrane. The catalysed reaction is di-trans,octa-cis-undecaprenyl diphosphate + H2O = di-trans,octa-cis-undecaprenyl phosphate + phosphate + H(+). Catalyzes the dephosphorylation of undecaprenyl diphosphate (UPP). Confers resistance to bacitracin. The polypeptide is Undecaprenyl-diphosphatase (Campylobacter concisus (strain 13826)).